The primary structure comprises 67 residues: Large ribosomal subunit protein uL29 (67 aa).

Belongs to the universal ribosomal protein uL29 family.

The chain is Large ribosomal subunit protein uL29 from Wolbachia pipientis wMel.